The primary structure comprises 385 residues: Mitogen-activated protein kinase HOG1 (385 aa).

Residues 23–305 (YTDLNPVGMG…AASALTHPYM (283 aa)) form the Protein kinase domain. Residues 29–37 (VGMGAFGLV) and Lys52 each bind ATP. Catalysis depends on Asp144, which acts as the Proton acceptor. Thr174 carries the post-translational modification Phosphothreonine. A TXY motif is present at residues 174-176 (TGY). Tyr176 is modified (phosphotyrosine).

Belongs to the protein kinase superfamily. Ser/Thr protein kinase family. MAP kinase subfamily. HOG1 sub-subfamily. Mg(2+) serves as cofactor. Post-translationally, dually phosphorylated on Thr-174 and Tyr-176, which activates the enzyme.

It is found in the cytoplasm. It localises to the nucleus. It catalyses the reaction L-seryl-[protein] + ATP = O-phospho-L-seryl-[protein] + ADP + H(+). The enzyme catalyses L-threonyl-[protein] + ATP = O-phospho-L-threonyl-[protein] + ADP + H(+). Its activity is regulated as follows. Activated by tyrosine and threonine phosphorylation. In terms of biological role, proline-directed serine/threonine-protein kinase involved in a signal transduction pathway that is activated by changes in the osmolarity of the extracellular environment. Controls osmotic regulation of transcription of target genes. The sequence is that of Mitogen-activated protein kinase HOG1 (HOG1) from Scheffersomyces stipitis (strain ATCC 58785 / CBS 6054 / NBRC 10063 / NRRL Y-11545) (Yeast).